A 249-amino-acid chain; its full sequence is tRNA pseudouridine synthase A (249 aa).

The active-site Nucleophile is D53. Substrate is bound at residue Y111.

This sequence belongs to the tRNA pseudouridine synthase TruA family. Homodimer.

The enzyme catalyses uridine(38/39/40) in tRNA = pseudouridine(38/39/40) in tRNA. Functionally, formation of pseudouridine at positions 38, 39 and 40 in the anticodon stem and loop of transfer RNAs. The protein is tRNA pseudouridine synthase A of Streptococcus equi subsp. equi (strain 4047).